Reading from the N-terminus, the 243-residue chain is Probable transcriptional regulatory protein LCABL_11860 (243 aa).

The tract at residues 1 to 23 (MSGHSKWHNIQGRKNAQDSKRGK) is disordered.

The protein belongs to the TACO1 family.

It is found in the cytoplasm. This chain is Probable transcriptional regulatory protein LCABL_11860, found in Lacticaseibacillus casei (strain BL23) (Lactobacillus casei).